The following is an 843-amino-acid chain: Molybdenum cofactor sulfurase (843 aa).

At Lys-241 the chain carries N6-(pyridoxal phosphate)lysine. Cys-405 is an active-site residue. An MOSC domain is found at 657 to 836; sequence QYLRKFVMPG…LMVGDIVIPS (180 aa).

This sequence belongs to the class-V pyridoxal-phosphate-dependent aminotransferase family. MOCOS subfamily. The cofactor is pyridoxal 5'-phosphate.

The enzyme catalyses Mo-molybdopterin + L-cysteine + AH2 = thio-Mo-molybdopterin + L-alanine + A + H2O. In terms of biological role, sulfurates the molybdenum cofactor. Sulfation of molybdenum is essential for xanthine dehydrogenase (XDH) and aldehyde oxidase (ADO) enzymes in which molybdenum cofactor is liganded by 1 oxygen and 1 sulfur atom in active form. This chain is Molybdenum cofactor sulfurase, found in Aspergillus fumigatus (strain CBS 144.89 / FGSC A1163 / CEA10) (Neosartorya fumigata).